The following is a 334-amino-acid chain: Lipoyl synthase (334 aa).

Cys-71, Cys-76, Cys-82, Cys-97, Cys-101, Cys-104, and Ser-312 together coordinate [4Fe-4S] cluster. In terms of domain architecture, Radical SAM core spans 83–301; it reads WSHGTATFMV…RQEGLRRGFR (219 aa).

The protein belongs to the radical SAM superfamily. Lipoyl synthase family. [4Fe-4S] cluster is required as a cofactor.

Its subcellular location is the cytoplasm. It carries out the reaction [[Fe-S] cluster scaffold protein carrying a second [4Fe-4S](2+) cluster] + N(6)-octanoyl-L-lysyl-[protein] + 2 oxidized [2Fe-2S]-[ferredoxin] + 2 S-adenosyl-L-methionine + 4 H(+) = [[Fe-S] cluster scaffold protein] + N(6)-[(R)-dihydrolipoyl]-L-lysyl-[protein] + 4 Fe(3+) + 2 hydrogen sulfide + 2 5'-deoxyadenosine + 2 L-methionine + 2 reduced [2Fe-2S]-[ferredoxin]. The protein operates within protein modification; protein lipoylation via endogenous pathway; protein N(6)-(lipoyl)lysine from octanoyl-[acyl-carrier-protein]: step 2/2. Functionally, catalyzes the radical-mediated insertion of two sulfur atoms into the C-6 and C-8 positions of the octanoyl moiety bound to the lipoyl domains of lipoate-dependent enzymes, thereby converting the octanoylated domains into lipoylated derivatives. The sequence is that of Lipoyl synthase from Halorhodospira halophila (strain DSM 244 / SL1) (Ectothiorhodospira halophila (strain DSM 244 / SL1)).